Consider the following 234-residue polypeptide: Phosphoribosylaminoimidazole-succinocarboxamide synthase (234 aa).

The protein belongs to the SAICAR synthetase family.

It carries out the reaction 5-amino-1-(5-phospho-D-ribosyl)imidazole-4-carboxylate + L-aspartate + ATP = (2S)-2-[5-amino-1-(5-phospho-beta-D-ribosyl)imidazole-4-carboxamido]succinate + ADP + phosphate + 2 H(+). The protein operates within purine metabolism; IMP biosynthesis via de novo pathway; 5-amino-1-(5-phospho-D-ribosyl)imidazole-4-carboxamide from 5-amino-1-(5-phospho-D-ribosyl)imidazole-4-carboxylate: step 1/2. The polypeptide is Phosphoribosylaminoimidazole-succinocarboxamide synthase (Clostridium botulinum (strain Okra / Type B1)).